We begin with the raw amino-acid sequence, 250 residues long: 5-oxoprolinase subunit A (250 aa).

It belongs to the LamB/PxpA family. In terms of assembly, forms a complex composed of PxpA, PxpB and PxpC.

The enzyme catalyses 5-oxo-L-proline + ATP + 2 H2O = L-glutamate + ADP + phosphate + H(+). Its function is as follows. Catalyzes the cleavage of 5-oxoproline to form L-glutamate coupled to the hydrolysis of ATP to ADP and inorganic phosphate. In Pseudomonas fluorescens (strain Pf0-1), this protein is 5-oxoprolinase subunit A.